The following is a 162-amino-acid chain: Endoribonuclease YbeY (162 aa).

3 residues coordinate Zn(2+): H117, H121, and H127.

The protein belongs to the endoribonuclease YbeY family. Zn(2+) serves as cofactor.

It localises to the cytoplasm. In terms of biological role, single strand-specific metallo-endoribonuclease involved in late-stage 70S ribosome quality control and in maturation of the 3' terminus of the 16S rRNA. The chain is Endoribonuclease YbeY from Francisella tularensis subsp. mediasiatica (strain FSC147).